A 271-amino-acid chain; its full sequence is MLKIADTTFTSRLFTGTGKFSSPELMLEALRASGSQLITMAMKRVDLQSGNDAILAPLRQLGVRLLPNTSGAKTAEEAIFAARLAREALNTHWVKLEVHPDVRYLLPDPIETLKAAEVLVKEGFVVLPYCGADPVLCKRLEEVGCAAVMPLGSPIGSNLGLRTRDFLQIIIEQSKVPVVVDAGIGAPSHALEALELGADAVLVNTAIAVAHSPVQMAHAFRLAVESGERARLAGLGASPFNPSQPDTLQLRATATSPLTGFLSQLEEQDHV.

K95 acts as the Schiff-base intermediate with DXP in catalysis. 1-deoxy-D-xylulose 5-phosphate contacts are provided by residues G156, 182–183 (AG), and 204–205 (NT).

This sequence belongs to the ThiG family. As to quaternary structure, homotetramer. Forms heterodimers with either ThiH or ThiS.

The protein localises to the cytoplasm. The enzyme catalyses [ThiS sulfur-carrier protein]-C-terminal-Gly-aminoethanethioate + 2-iminoacetate + 1-deoxy-D-xylulose 5-phosphate = [ThiS sulfur-carrier protein]-C-terminal Gly-Gly + 2-[(2R,5Z)-2-carboxy-4-methylthiazol-5(2H)-ylidene]ethyl phosphate + 2 H2O + H(+). It functions in the pathway cofactor biosynthesis; thiamine diphosphate biosynthesis. Its function is as follows. Catalyzes the rearrangement of 1-deoxy-D-xylulose 5-phosphate (DXP) to produce the thiazole phosphate moiety of thiamine. Sulfur is provided by the thiocarboxylate moiety of the carrier protein ThiS. In vitro, sulfur can be provided by H(2)S. In Yersinia pestis, this protein is Thiazole synthase.